We begin with the raw amino-acid sequence, 289 residues long: CRISPR system Cms protein Csm4 (289 aa).

This sequence belongs to the CRISPR-associated Csm4 family. Probably part of the Csm effector complex, that includes Cas10, Csm2, Csm3, Csm4, Csm5 and mature crRNA. Interacts with Cas10 (csm1).

CRISPR (clustered regularly interspaced short palindromic repeat) is an adaptive immune system that provides protection against mobile genetic elements (viruses, transposable elements and conjugative plasmids). CRISPR clusters contain spacers, sequences complementary to antecedent mobile elements, and target invading nucleic acids. CRISPR clusters are transcribed and processed into CRISPR RNA (crRNA). The type III-A Csm effector complex binds crRNA and acts as a crRNA-guided RNase, DNase and cyclic oligoadenylate synthase; binding of target RNA cognate to the crRNA is required for all activities. Functionally, the subunit probably binds to the 5' handle of the crRNA, helping in discrimination between self- and non-self. The protein is CRISPR system Cms protein Csm4 of Thermococcus onnurineus (strain NA1).